The sequence spans 372 residues: Cytochrome b (372 aa).

The next 4 membrane-spanning stretches (helical) occupy residues 29 to 49, 73 to 95, 108 to 128, and 174 to 194; these read FGSM…ILSW, WFIR…LHIL, VWYS…LGYV, and FFSF…IHLI. His-79 and His-93 together coordinate heme b. Heme b contacts are provided by His-178 and His-192. Residue His-197 coordinates a ubiquinone. 4 helical membrane-spanning segments follow: residues 220 to 240, 284 to 301, 311 to 336, and 344 to 363; these read FSLK…FCIF, LGGV…VFLG, MVKT…IMGG, and DILG…IMLL.

It belongs to the cytochrome b family. The main subunits of complex b-c1 are: cytochrome b, cytochrome c1 and the Rieske protein. Heme b serves as cofactor.

The protein resides in the mitochondrion inner membrane. Functionally, component of the ubiquinol-cytochrome c reductase complex (complex III or cytochrome b-c1 complex) that is part of the mitochondrial respiratory chain. The b-c1 complex mediates electron transfer from ubiquinol to cytochrome c. Contributes to the generation of a proton gradient across the mitochondrial membrane that is then used for ATP synthesis. This is Cytochrome b (mt:Cyt-b) from Leptorhynchoides thecatus (Thorny-headed worm).